The primary structure comprises 265 residues: Hemin import ATP-binding protein HmuV (265 aa).

The 238-residue stretch at 10–247 (LVARHLRFQT…ETLAHWYRAD (238 aa)) folds into the ABC transporter domain. Residue 42–49 (GPNGAGKS) coordinates ATP.

Belongs to the ABC transporter superfamily. Heme (hemin) importer (TC 3.A.1.14.5) family. The complex is composed of two ATP-binding proteins (HmuV), two transmembrane proteins (HmuU) and a solute-binding protein (HmuT).

The protein localises to the cell inner membrane. Its function is as follows. Part of the ABC transporter complex HmuTUV involved in hemin import. Responsible for energy coupling to the transport system. In Pectobacterium atrosepticum (strain SCRI 1043 / ATCC BAA-672) (Erwinia carotovora subsp. atroseptica), this protein is Hemin import ATP-binding protein HmuV.